The primary structure comprises 1600 residues: Eukaryotic translation initiation factor 4 gamma 1 (1600 aa).

Residues 1-88 (MNKAPQPTGP…ARPGPAPHVY (88 aa)) are disordered. The span at 7 to 24 (PTGPPPARSPGLPQPAFP) shows a compositional bias: pro residues. Position 15 is a phosphoserine (Ser-15). Over residues 34–48 (STPQATQMNTPSQPR) the composition is skewed to polar residues. Positions 60–79 (PSRAQPPSSAASRVQSAAPA) are enriched in low complexity. Omega-N-methylarginine is present on residues Arg-80 and Arg-117. Disordered regions lie at residues 173-230 (NQPP…NGES), 243-326 (SQGA…LSPE), 366-501 (ETHE…QLSQ), 507-526 (AATQ…KELN), and 541-606 (VDPA…DQWK). The segment at 179-207 (APKRERKTIRIRDPNQGGKDITEEIMSGA) is PABPC1-binding. Residues 208 to 220 (RTASTPTPPQTGG) show a composition bias toward polar residues. Phosphothreonine is present on Thr-214. Ser-230 is modified (phosphoserine). Residues 269-280 (SPSPTPSPPPIL) show a composition bias toward pro residues. Ser-324 carries the post-translational modification Phosphoserine. Residues 438 to 449 (KVSSAALASILS) show a composition bias toward low complexity. Over residues 463 to 479 (QEEEMEEDDDDEEGGEA) the composition is skewed to acidic residues. Over residues 551–562 (QPPTGSNPSPES) the composition is skewed to polar residues. 2 stretches are compositionally biased toward basic and acidic residues: residues 578-587 (WDSKEDKIHN) and 596-606 (QKYEYKSDQWK). N6-acetyllysine is present on Lys-606. Positions 611 to 622 (EEKKRYDREFLL) are EIF4E-binding. The residue at position 651 (Thr-651) is a Phosphothreonine. Disordered stretches follow at residues 667–719 (GPDF…TRKI) and 734–760 (AEKA…DGSK). An eIF3/EIF4A-binding region spans residues 686–1089 (GPPRGGPGGE…GSIDSNNQLF (404 aa)). Omega-N-methylarginine is present on residues Arg-689 and Arg-698. A compositionally biased stretch (low complexity) spans 697–707 (PRGPAGLGPRR). Over residues 745 to 760 (TAADKDRGEEDADGSK) the composition is skewed to basic and acidic residues. Positions 765 to 993 (FRRVRSILNK…QDVLDLRQSN (229 aa)) constitute an MIF4G domain. Disordered stretches follow at residues 1029–1117 (AKGS…SEAT) and 1129–1238 (QQTL…AALS). Ser-1032 is modified (phosphoserine). Residues Arg-1036 and Arg-1046 each carry the omega-N-methylarginine modification. Phosphoserine is present on residues Ser-1081 and Ser-1096. The residue at position 1099 (Lys-1099) is an N6-acetyllysine. 2 positions are modified to phosphoserine: Ser-1147 and Ser-1149. Residues 1148–1180 (LSRERGEKAGDRGDRLERSERGGDRGDRLDRAR) show a composition bias toward basic and acidic residues. Residue Ser-1187 is modified to Phosphoserine; by PKC/PRKCA. Positions 1188–1225 (FSKEVEERSRERPSQPEGLRKAASLTEDRGRDPVKREA) are enriched in basic and acidic residues. Residues Ser-1189, Ser-1196, and Ser-1211 each carry the phosphoserine modification. At Thr-1213 the chain carries Phosphothreonine. Phosphoserine is present on residues Ser-1231 and Ser-1238. The region spanning 1241 to 1363 (EVEKKSKAII…PMGELFREIT (123 aa)) is the MI domain. Residues 1429–1599 (ESEAPGQRTL…REAEDEESDH (171 aa)) form the W2 domain. Residues 1450 to 1600 (LLKDGGSNQR…EAEDEESDHN (151 aa)) form an EIF4A-binding region. Positions 1585–1600 (FFNWLREAEDEESDHN) are necessary but not sufficient for MKNK1-binding. Residue Ser-1597 is modified to Phosphoserine.

Belongs to the eukaryotic initiation factor 4G family. In terms of assembly, eIF4F is a multi-subunit complex, the composition of which varies with external and internal environmental conditions. It is composed of at least EIF4A, EIF4E (cap-binding) and EIF4G1/EIF4G3. Interacts with eIF3 complex, mutually exclusive with EIF4A1 or EIF4A2, EIF4E and through its N-terminus with PABPC1. Interacts with EIF4E or with EIF1 (mutually exclusive) through a common binding site. Interacts through its C-terminus with the serine/threonine kinases MKNK1, and with MKNK2. Appears to act as a scaffold protein, holding these enzymes in place to phosphorylate EIF4E. Non-phosphorylated EIF4EBP1 competes with EIF4G1/EIF4G3 to interact with EIF4E; insulin stimulated MAP-kinase (MAPK1 and MAPK3) phosphorylation of EIF4EBP1 causes dissociation of the complex allowing EIF4G1/EIF4G3 to bind and consequent initiation of translation. EIF4G1/EIF4G3 interacts with PABPC1 to bring about circularization of the mRNA. Interacts with EIF4E3. Interacts with CIRBP and MIF4GD. Interacts with RBM4. Interacts with HNRNPD/AUF1; the interaction requires RNA. Interacts with DDX3X; the interaction requires RNA. Interacts with DAZAP2. (Microbial infection) Interacts with murine norovirus viral genome-linked protein (via C-terminus); this interaction plays a role in translation of viral proteins. Phosphorylated at multiple sites in vivo. Phosphorylation at Ser-1187 by PRKCA induces binding to MKNK1.

It is found in the cytoplasm. The protein resides in the nucleus. Its subcellular location is the stress granule. Its function is as follows. Component of the protein complex eIF4F, which is involved in the recognition of the mRNA cap, ATP-dependent unwinding of 5'-terminal secondary structure and recruitment of mRNA to the ribosome. Exists in two complexes, either with EIF1 or with EIF4E (mutually exclusive). Together with EIF1, is required for leaky scanning, in particular for avoiding cap-proximal start codon. Together with EIF4E, antagonizes the scanning promoted by EIF1-EIF4G1 and locates the start codon (through a TISU element) without scanning. As a member of the eIF4F complex, required for endoplasmic reticulum stress-induced ATF4 mRNA translation. The polypeptide is Eukaryotic translation initiation factor 4 gamma 1 (Eif4g1) (Mus musculus (Mouse)).